Reading from the N-terminus, the 454-residue chain is Bifunctional protein GlmU (454 aa).

The pyrophosphorylase stretch occupies residues 1 to 226; that stretch reads MALNVVILAA…AVEVEGANNR (226 aa). UDP-N-acetyl-alpha-D-glucosamine contacts are provided by residues 8-11, Lys-22, Gln-73, 78-79, 100-102, Gly-137, Glu-151, Asn-166, and Asn-224; these read LAAG, GT, and YGD. Asp-102 provides a ligand contact to Mg(2+). Residue Asn-224 coordinates Mg(2+). The linker stretch occupies residues 227–247; it reads VQLAQLERAYQARAAEKLMLE. An N-acetyltransferase region spans residues 248–454; sequence GANLRDPARI…GWARPVKKAK (207 aa). 2 residues coordinate UDP-N-acetyl-alpha-D-glucosamine: Arg-330 and Lys-348. Residue His-360 is the Proton acceptor of the active site. 2 residues coordinate UDP-N-acetyl-alpha-D-glucosamine: Tyr-363 and Asn-374. Acetyl-CoA-binding positions include Ala-377, 383 to 384, Ser-402, Ala-420, and Arg-437; that span reads NY.

The protein in the N-terminal section; belongs to the N-acetylglucosamine-1-phosphate uridyltransferase family. This sequence in the C-terminal section; belongs to the transferase hexapeptide repeat family. Homotrimer. It depends on Mg(2+) as a cofactor.

It is found in the cytoplasm. It catalyses the reaction alpha-D-glucosamine 1-phosphate + acetyl-CoA = N-acetyl-alpha-D-glucosamine 1-phosphate + CoA + H(+). The catalysed reaction is N-acetyl-alpha-D-glucosamine 1-phosphate + UTP + H(+) = UDP-N-acetyl-alpha-D-glucosamine + diphosphate. Its pathway is nucleotide-sugar biosynthesis; UDP-N-acetyl-alpha-D-glucosamine biosynthesis; N-acetyl-alpha-D-glucosamine 1-phosphate from alpha-D-glucosamine 6-phosphate (route II): step 2/2. The protein operates within nucleotide-sugar biosynthesis; UDP-N-acetyl-alpha-D-glucosamine biosynthesis; UDP-N-acetyl-alpha-D-glucosamine from N-acetyl-alpha-D-glucosamine 1-phosphate: step 1/1. It participates in bacterial outer membrane biogenesis; LPS lipid A biosynthesis. Functionally, catalyzes the last two sequential reactions in the de novo biosynthetic pathway for UDP-N-acetylglucosamine (UDP-GlcNAc). The C-terminal domain catalyzes the transfer of acetyl group from acetyl coenzyme A to glucosamine-1-phosphate (GlcN-1-P) to produce N-acetylglucosamine-1-phosphate (GlcNAc-1-P), which is converted into UDP-GlcNAc by the transfer of uridine 5-monophosphate (from uridine 5-triphosphate), a reaction catalyzed by the N-terminal domain. This Shewanella piezotolerans (strain WP3 / JCM 13877) protein is Bifunctional protein GlmU.